A 402-amino-acid chain; its full sequence is Multidrug resistance protein MdtH (402 aa).

Topologically, residues 1–12 are cytoplasmic; that stretch reads MSRVSQARNLGK. Residues 13–33 traverse the membrane as a helical segment; that stretch reads YFLLIDNMLVVLGFFVVFPLI. The Periplasmic portion of the chain corresponds to 34–98; it reads SIRFVDQMGW…GFATMGIAHE (65 aa). A helical membrane pass occupies residues 99–116; it reads PWLLWFSCLLSGLGGTLF. The Cytoplasmic segment spans residues 117 to 138; sequence DPPRSALVVKLIRPQQRGRFFS. The helical transmembrane segment at 139-159 threads the bilayer; the sequence is LLMMQDSAGAVIGALLGSWLL. Residues 160-164 lie on the Periplasmic side of the membrane; it reads QYDFR. The chain crosses the membrane as a helical span at residues 165–185; the sequence is LVCATGAVLFVLCAAFNAWLL. At 186–213 the chain is on the cytoplasmic side; sequence PAWKLSTVRTPVREGMTRVMRDKRFVTY. The chain crosses the membrane as a helical span at residues 214–234; sequence VLTLAGYYMLAVQVMLMLPIM. Residues 235-243 are Periplasmic-facing; it reads VNDVAGAPS. A helical membrane pass occupies residues 244-264; sequence AVKWMYAIEACLSLTLLYPIA. The Cytoplasmic portion of the chain corresponds to 265-276; it reads RWSEKHFRLEHR. The chain crosses the membrane as a helical span at residues 277–297; that stretch reads LMAGLLIMSLSMMPVGMVSGL. Residues 298–299 are Periplasmic-facing; that stretch reads QQ. A helical transmembrane segment spans residues 300–320; sequence LFTLICLFYIGSIIAEPARET. At 321–339 the chain is on the cytoplasmic side; that stretch reads LSASLADARARGSYMGFSR. Residues 340-360 form a helical membrane-spanning segment; that stretch reads LGLAIGGAIGYIGGGWLFDLG. Residues 361–367 are Periplasmic-facing; that stretch reads KSAHQPE. A helical membrane pass occupies residues 368 to 388; it reads LPWMMLGIIGIFTFLALGWQF. The Cytoplasmic segment spans residues 389–402; it reads SQKRAARRLLERDA.

It belongs to the major facilitator superfamily. DHA1 family. MdtH (TC 2.A.1.2.21) subfamily.

The protein localises to the cell inner membrane. In terms of biological role, confers resistance to norfloxacin and enoxacin. The polypeptide is Multidrug resistance protein MdtH (Escherichia coli O139:H28 (strain E24377A / ETEC)).